We begin with the raw amino-acid sequence, 541 residues long: GTPase Obg (541 aa).

An Obg domain is found at 2-159; the sequence is PTFVDRVVLH…LDAVLELKSV (158 aa). A disordered region spans residues 63 to 84; it reads HPHQRAGGGRPGQGSNRHGADG. An OBG-type G domain is found at 160–332; that stretch reads ADVALVGFPS…LALALAELVA (173 aa). Residues 166–173, 191–195, 213–216, 284–287, and 313–315 each bind GTP; these read GFPSAGKS, FTTLV, DVPG, NKVD, and STA. Mg(2+) contacts are provided by serine 173 and threonine 193. One can recognise an OCT domain in the interval 350 to 427; it reads PRAVDEPDFT…IGAVTFDWEP (78 aa). Residues 497–541 are disordered; it reads KRLTRAQRTALSDSADDFDDGAGFSDSAAFGDSGGSGGDADGGRG. The segment covering 517-527 has biased composition (low complexity); it reads GAGFSDSAAFG. Residues 528-541 show a composition bias toward gly residues; the sequence is DSGGSGGDADGGRG.

Belongs to the TRAFAC class OBG-HflX-like GTPase superfamily. OBG GTPase family. As to quaternary structure, monomer. Requires Mg(2+) as cofactor.

Its subcellular location is the cytoplasm. Its function is as follows. An essential GTPase which binds GTP, GDP and possibly (p)ppGpp with moderate affinity, with high nucleotide exchange rates and a fairly low GTP hydrolysis rate. Plays a role in control of the cell cycle, stress response, ribosome biogenesis and in those bacteria that undergo differentiation, in morphogenesis control. The polypeptide is GTPase Obg (Parafrankia sp. (strain EAN1pec)).